The following is a 394-amino-acid chain: Salivary plasminogen activator gamma (394 aa).

A signal peptide spans 1–36; sequence MVNTMKTKLLCVLLLCGAVFSLPRQETYRQLARGSR. The 82-residue stretch at 45 to 126 folds into the Kringle domain; sequence CYKDQGVTYR…TSESCSVPVC (82 aa). Cystine bridges form between C45–C126, C66–C108, C97–C121, C131–C262, C174–C190, C182–C251, C276–C351, C308–C324, and C341–C369. A Peptidase S1 domain is found at 143–393; it reads STGGLFTDIT…YLGWIRDNMR (251 aa). Catalysis depends on charge relay system residues H189 and D238. N315 carries an N-linked (GlcNAc...) asparagine glycan. The Charge relay system role is filled by S345.

It belongs to the peptidase S1 family. In terms of assembly, monomer.

The protein localises to the secreted. It carries out the reaction Specific cleavage of Arg-|-Val bond in plasminogen to form plasmin.. Functionally, probably essential to support the feeding habits of this exclusively haematophagous animal. Probable potent thrombolytic agent. In Desmodus rotundus (Vampire bat), this protein is Salivary plasminogen activator gamma.